We begin with the raw amino-acid sequence, 270 residues long: Sulfur carrier protein FdhD (270 aa).

Catalysis depends on Cys116, which acts as the Cysteine persulfide intermediate. 253–258 (FAREGK) is a binding site for Mo-bis(molybdopterin guanine dinucleotide).

It belongs to the FdhD family.

The protein localises to the cytoplasm. Required for formate dehydrogenase (FDH) activity. Acts as a sulfur carrier protein that transfers sulfur from IscS to the molybdenum cofactor prior to its insertion into FDH. In Haemophilus influenzae (strain 86-028NP), this protein is Sulfur carrier protein FdhD.